The sequence spans 90 residues: DNA-binding protein HTa (90 aa).

It belongs to the bacterial histone-like protein family. Homotetramer.

In terms of biological role, histone-like DNA-binding protein which is capable of wrapping DNA to stabilize it, and thus to prevent its denaturation under extreme environmental conditions. The polypeptide is DNA-binding protein HTa (Thermoplasma acidophilum (strain ATCC 25905 / DSM 1728 / JCM 9062 / NBRC 15155 / AMRC-C165)).